The following is a 99-amino-acid chain: Putative regulatory protein Kole_1849 (99 aa).

This sequence belongs to the RemA family.

This is Putative regulatory protein Kole_1849 from Kosmotoga olearia (strain ATCC BAA-1733 / DSM 21960 / TBF 19.5.1).